Reading from the N-terminus, the 522-residue chain is Glucose-1-phosphate adenylyltransferase large subunit, chloroplastic/amyloplastic (522 aa).

The transit peptide at 1–62 directs the protein to the chloroplast; the sequence is MSSMQFSSVL…RGPAATGAQC (62 aa). The segment covering 28-42 has biased composition (basic and acidic residues); it reads SERLKVGDSSSIRHE. Residues 28–54 are disordered; it reads SERLKVGDSSSIRHERASRRMCNGGRG.

It belongs to the bacterial/plant glucose-1-phosphate adenylyltransferase family. In terms of assembly, heterotetramer. In terms of tissue distribution, abundantly expressed in the whole grains, a slightly less abundant expression is seen in leaves, while a low level expression is seen in the roots. A greater expression is seen in the endosperm than in the embryo and pericarp layers.

It is found in the plastid. The protein localises to the chloroplast. Its subcellular location is the amyloplast. The enzyme catalyses alpha-D-glucose 1-phosphate + ATP + H(+) = ADP-alpha-D-glucose + diphosphate. Its pathway is glycan biosynthesis; starch biosynthesis. With respect to regulation, insensitive to 3'phosphoglycerate and orthophosphate. Its function is as follows. This protein plays a role in synthesis of starch. It catalyzes the synthesis of the activated glycosyl donor, ADP-glucose from Glc-1-P and ATP. This Triticum aestivum (Wheat) protein is Glucose-1-phosphate adenylyltransferase large subunit, chloroplastic/amyloplastic (AGP-L).